We begin with the raw amino-acid sequence, 408 residues long: UDP-glucose 4-epimerase 2 (408 aa).

13–44 is an NAD(+) binding site; that stretch reads TVLVTGGAGYIGSHAVLQLLLAGFRAVVVDNL. Residue Ser-138 participates in substrate binding. The active-site Proton acceptor is the Tyr-162. The interval 369 to 408 is disordered; that stretch reads GSPKQNGHCTNGFSESTRHNGHNGYGLVDSAKHNGNGHFH. Residues 370 to 383 show a composition bias toward polar residues; the sequence is SPKQNGHCTNGFSE.

This sequence belongs to the NAD(P)-dependent epimerase/dehydratase family. The cofactor is NAD(+).

The enzyme catalyses UDP-alpha-D-glucose = UDP-alpha-D-galactose. It participates in carbohydrate metabolism; galactose metabolism. In terms of biological role, catalyzes the interconversion between UDP-glucose and UDP-galactose. This chain is UDP-glucose 4-epimerase 2 (UGE-2), found in Oryza sativa subsp. japonica (Rice).